Here is a 379-residue protein sequence, read N- to C-terminus: Chaperone protein DnaJ (379 aa).

A J domain is found at 5–70; it reads DYYELLEVSR…QKRAAYDQFG (66 aa). The CR-type zinc-finger motif lies at 135 to 213; that stretch reads GKEVEITVPR…CHGQGRVRES (79 aa). Cys148, Cys151, Cys165, Cys168, Cys187, Cys190, Cys201, and Cys204 together coordinate Zn(2+). CXXCXGXG motif repeat units follow at residues 148-155, 165-172, 187-194, and 201-208; these read CTVCEGSG, CETCQGMG, CPTCHGEG, and CASCHGQG.

Belongs to the DnaJ family. As to quaternary structure, homodimer. Requires Zn(2+) as cofactor.

Its subcellular location is the cytoplasm. Participates actively in the response to hyperosmotic and heat shock by preventing the aggregation of stress-denatured proteins and by disaggregating proteins, also in an autonomous, DnaK-independent fashion. Unfolded proteins bind initially to DnaJ; upon interaction with the DnaJ-bound protein, DnaK hydrolyzes its bound ATP, resulting in the formation of a stable complex. GrpE releases ADP from DnaK; ATP binding to DnaK triggers the release of the substrate protein, thus completing the reaction cycle. Several rounds of ATP-dependent interactions between DnaJ, DnaK and GrpE are required for fully efficient folding. Also involved, together with DnaK and GrpE, in the DNA replication of plasmids through activation of initiation proteins. This chain is Chaperone protein DnaJ, found in Legionella pneumophila (strain Corby).